Here is a 68-residue protein sequence, read N- to C-terminus: Conotoxin phi-MiXXVIIB (68 aa).

Positions 1–29 (MRFFFLLLTVALFLTSITGDDAERMLGMK) are cleaved as a signal peptide. A propeptide spanning residues 30 to 35 (EGGYVR) is cleaved from the precursor. Intrachain disulfides connect C38-C49, C42-C51, C45-C56, and C50-C61. P44 carries the post-translational modification 4-hydroxyproline.

It belongs to the conotoxin G2 superfamily. 1 family. In terms of tissue distribution, expressed by the venom duct.

Its subcellular location is the secreted. This peptide promotes cell proliferation (EC(50)=17.85 uM) and inhibits apoptosis (EC(50)=2.2 uM). This is Conotoxin phi-MiXXVIIB from Conus miles (Soldier cone).